We begin with the raw amino-acid sequence, 252 residues long: 4-hydroxy-tetrahydrodipicolinate reductase (252 aa).

NAD(+) is bound by residues 8–13 (GCSGKM), 85–87 (CTT), and 109–112 (SANM). The active-site Proton donor/acceptor is His-142. His-143 serves as a coordination point for (S)-2,3,4,5-tetrahydrodipicolinate. Lys-146 acts as the Proton donor in catalysis. Residue 152-153 (GT) participates in (S)-2,3,4,5-tetrahydrodipicolinate binding.

It belongs to the DapB family.

The protein resides in the cytoplasm. The catalysed reaction is (S)-2,3,4,5-tetrahydrodipicolinate + NAD(+) + H2O = (2S,4S)-4-hydroxy-2,3,4,5-tetrahydrodipicolinate + NADH + H(+). It carries out the reaction (S)-2,3,4,5-tetrahydrodipicolinate + NADP(+) + H2O = (2S,4S)-4-hydroxy-2,3,4,5-tetrahydrodipicolinate + NADPH + H(+). It functions in the pathway amino-acid biosynthesis; L-lysine biosynthesis via DAP pathway; (S)-tetrahydrodipicolinate from L-aspartate: step 4/4. In terms of biological role, catalyzes the conversion of 4-hydroxy-tetrahydrodipicolinate (HTPA) to tetrahydrodipicolinate. The polypeptide is 4-hydroxy-tetrahydrodipicolinate reductase (Clostridium novyi (strain NT)).